The chain runs to 103 residues: uncharacterized protein (103 aa).

This is an uncharacterized protein from Escherichia coli (strain K12).